The primary structure comprises 215 residues: 3-isopropylmalate dehydratase small subunit (215 aa).

It belongs to the LeuD family. LeuD type 1 subfamily. As to quaternary structure, heterodimer of LeuC and LeuD.

It carries out the reaction (2R,3S)-3-isopropylmalate = (2S)-2-isopropylmalate. It participates in amino-acid biosynthesis; L-leucine biosynthesis; L-leucine from 3-methyl-2-oxobutanoate: step 2/4. In terms of biological role, catalyzes the isomerization between 2-isopropylmalate and 3-isopropylmalate, via the formation of 2-isopropylmaleate. The polypeptide is 3-isopropylmalate dehydratase small subunit (Polynucleobacter necessarius subsp. necessarius (strain STIR1)).